Reading from the N-terminus, the 698-residue chain is MDWAIKAARKKTQRKPGSTRSIIETLDDLNNLTTDAHSEINQRLYESSEWLRNNVYMNTLKYEDKKMEESLISPENTHNKMDVEFPKMKGEYELSNSQNDAAKDVTKTPRNGLHNDKSITPKSLRRKEVTEGMNRFSIHDTNKSPVEPLNSVKVDANESEKSSPWSPYKVEKVLRESSKTSESPINTKRFDNQTWAAKEEMENEPILQALKKAESVKVKPPPNSGIARSQRRSNMFVPLPNKDPLIIQHIPPTKSSGSIPKVRTVKESPIAFKKKSTINSPAIRAVENSDTAGSTKASSVFDRLSSIPTKSFENKISRGNVGHKYSSSSIDLTGSPMKKVSQKFKSINSTDTDMQEALRDIFSVKNKITKNNSPKGKNSRKSSIPRFDKTSLKLTTHKKLAIIAEQKKKSKHSSDVHKTGSRPHSISPTKISVDSSSPSKEVKNYYQSPVRGYLRPTKASISPNKNKNLTTSQTPHRLKIKEKTLRKLSPNIADISKPESRKSKNYRLTNLQLLPPAEAERDDLKKKFDKRLSGIMRSQQEHHRRKQEKQKRMSHLEQDLKKQTSFSNDYKDIRLKESLAPFDNHVRDTINKNTAFSTDNILATINTVDHREIIGNVTPKIASVNDSLPEINTDSEDEASVTLAAWAKSPYLQEQLIRQQDINPQTIFGPIPPLHTDEIFPNPRLNRLKPRQIVPKRS.

S268 bears the Phosphoserine mark. Disordered stretches follow at residues 365-390 (KNKI…FDKT), 405-444 (EQKK…EVKN), and 455-474 (RPTK…TSQT). 2 stretches are compositionally biased toward polar residues: residues 422-439 (RPHS…SSPS) and 459-474 (ASIS…TSQT). Residue S489 is modified to Phosphoserine. The segment at 535-560 (IMRSQQEHHRRKQEKQKRMSHLEQDL) is disordered. A compositionally biased stretch (basic and acidic residues) spans 550–560 (QKRMSHLEQDL).

Belongs to the INCENP family. Component of the CPC complex at least composed of IPL1, BIR1 and SLI15. Phosphorylated by serine/threonine protein kinase IPL1.

Its subcellular location is the nucleus. The protein localises to the cytoplasm. It localises to the cytoskeleton. It is found in the spindle. The protein resides in the chromosome. Its subcellular location is the centromere. The protein localises to the kinetochore. In terms of biological role, component of the chromosomal passenger complex (CPC), a complex that acts as a key regulator of mitosis. Stimulates IPL1 kinase activity and facilitates its association with the mitotic spindle. Has a role in attaching the kinetochores to the microtubules and ensuring that sister kinetochores connect to opposite poles. The protein is Inner centromere protein SLI15 (SLI15) of Saccharomyces cerevisiae (strain ATCC 204508 / S288c) (Baker's yeast).